The following is a 411-amino-acid chain: Peptidase T (411 aa).

His78 is a Zn(2+) binding site. Asp80 is an active-site residue. Asp140 provides a ligand contact to Zn(2+). Glu173 acts as the Proton acceptor in catalysis. Glu174, Asp196, and His379 together coordinate Zn(2+).

The protein belongs to the peptidase M20B family. It depends on Zn(2+) as a cofactor.

The protein resides in the cytoplasm. It catalyses the reaction Release of the N-terminal residue from a tripeptide.. In terms of biological role, cleaves the N-terminal amino acid of tripeptides. The sequence is that of Peptidase T from Yersinia pseudotuberculosis serotype O:1b (strain IP 31758).